The following is a 700-amino-acid chain: Chaperonin CPN60, mitochondrial (700 aa).

Residues 1-9 (MRMKRIHIL) constitute a mitochondrion transit peptide. The interval 636–700 (TYKHKLHDDE…SMNDEYNYDE (65 aa)) is disordered. Residues 644-700 (DEDTDEDDEEDEDDEDDEDDLDDDDYDDEDEEDEEDEEDEDDEDDEDSMNDEYNYDE) are compositionally biased toward acidic residues.

The protein belongs to the chaperonin (HSP60) family.

It is found in the mitochondrion matrix. Its function is as follows. Implicated in mitochondrial protein import and macromolecular assembly. May facilitate the correct folding of imported proteins. May also prevent misfolding and promote the refolding and proper assembly of unfolded polypeptides generated under stress conditions in the mitochondrial matrix. The polypeptide is Chaperonin CPN60, mitochondrial (Plasmodium falciparum (isolate FCR-3 / Gambia)).